We begin with the raw amino-acid sequence, 690 residues long: Eukaryotic translation initiation factor 3 subunit B (690 aa).

The span at methionine 1–glycine 11 shows a compositional bias: basic and acidic residues. The interval methionine 1–aspartate 33 is disordered. A compositionally biased stretch (acidic residues) spans asparagine 15–phenylalanine 25. Residues serine 57 to aspartate 141 enclose the RRM domain. 5 WD repeats span residues threonine 207–lysine 246, glycine 292–leucine 331, isoleucine 334–glutamate 369, glutamate 442–leucine 484, and proline 530–threonine 575. The stretch at glutamate 613–isoleucine 646 forms a coiled coil.

It belongs to the eIF-3 subunit B family. In terms of assembly, component of the eukaryotic translation initiation factor 3 (eIF-3) complex. The eIF-3 complex interacts with pix. Interacts with mxt.

It localises to the cytoplasm. In terms of biological role, RNA-binding component of the eukaryotic translation initiation factor 3 (eIF-3) complex, which is involved in protein synthesis of a specialized repertoire of mRNAs and, together with other initiation factors, stimulates binding of mRNA and methionyl-tRNAi to the 40S ribosome. The eIF-3 complex specifically targets and initiates translation of a subset of mRNAs involved in cell proliferation. This chain is Eukaryotic translation initiation factor 3 subunit B, found in Drosophila mojavensis (Fruit fly).